We begin with the raw amino-acid sequence, 172 residues long: Adenine phosphoribosyltransferase (172 aa).

It belongs to the purine/pyrimidine phosphoribosyltransferase family. Homodimer.

It is found in the cytoplasm. It carries out the reaction AMP + diphosphate = 5-phospho-alpha-D-ribose 1-diphosphate + adenine. Its pathway is purine metabolism; AMP biosynthesis via salvage pathway; AMP from adenine: step 1/1. Its function is as follows. Catalyzes a salvage reaction resulting in the formation of AMP, that is energically less costly than de novo synthesis. In Lactiplantibacillus plantarum (strain ATCC BAA-793 / NCIMB 8826 / WCFS1) (Lactobacillus plantarum), this protein is Adenine phosphoribosyltransferase.